A 29-amino-acid polypeptide reads, in one-letter code: Glucagon (29 aa).

Ser2 is subject to Phosphoserine.

Belongs to the glucagon family.

Its subcellular location is the secreted. Its function is as follows. Glucagon plays a key role in glucose metabolism and homeostasis. Regulates blood glucose by increasing gluconeogenesis and decreasing glycolysis. The polypeptide is Glucagon (GCG) (Oryctolagus cuniculus (Rabbit)).